A 201-amino-acid chain; its full sequence is Type III effector protein HopBF1 (201 aa).

The ATP site is built by S39, Q40, K41, D106, I108, and D113. D154 is a catalytic residue. Q156 lines the ATP pocket.

It belongs to the HopBF1 family.

Its subcellular location is the secreted. The protein localises to the host cell. The enzyme catalyses L-seryl-[protein] + ATP = O-phospho-L-seryl-[protein] + ADP + H(+). Functionally, effector protein that targets and inactivates the plant molecular chaperone HSP90 during infection. HopBF1 is recognized by HSP90 as a host client. As a result, HopBF1 phosphorylates HSP90, leading to the inactivation of the HSP90 ATPase activity and chaperone function. Phosphorylation of HSP90 prevents activation of immune receptors that trigger the hypersensitive response in plants. HopBF1 is sufficient to cause severe disease symptoms in plants infected with P.syringae. In vitro, can phosphorylate the recombinant yeast HSP82 (HSP90) on Ser-99, Triticum aestivum (wheat) HSP90 and human HSP 90-beta, but not the prokaryotic HSP90 orthologs, HtpG from E.coli and P.syringae. Does not act on generic protein kinase substrates such as casein and myelin basic protein, as well as the yeast HSP70s and Bip chaperones. This Pseudomonas syringae pv. syringae (strain FF5) protein is Type III effector protein HopBF1.